The chain runs to 128 residues: Large ribosomal subunit protein uL22 (128 aa).

This sequence belongs to the universal ribosomal protein uL22 family. Part of the 50S ribosomal subunit.

In terms of biological role, this protein binds specifically to 23S rRNA; its binding is stimulated by other ribosomal proteins, e.g. L4, L17, and L20. It is important during the early stages of 50S assembly. It makes multiple contacts with different domains of the 23S rRNA in the assembled 50S subunit and ribosome. Functionally, the globular domain of the protein is located near the polypeptide exit tunnel on the outside of the subunit, while an extended beta-hairpin is found that lines the wall of the exit tunnel in the center of the 70S ribosome. The sequence is that of Large ribosomal subunit protein uL22 from Methylobacterium radiotolerans (strain ATCC 27329 / DSM 1819 / JCM 2831 / NBRC 15690 / NCIMB 10815 / 0-1).